A 788-amino-acid polypeptide reads, in one-letter code: MGSGGVIHCRCAKCFCYPSKRRIRRRPRNLTILNLPEDALFHILKWLSVGDILAVRAVHSHLKYLVDNHASVWACASFQELWPSPGNLKLFERAAEKGNFEAAVKLGIAYLYNEGLSVSDEARAEVNGLRASRYFSLAERLNVGAAPFIWLFIRPPWSVSGSCCKAVVHESLRAECQLQKTHRASILHCLGRVLSLFEDEEKQKQARKLFEESANQGCLTSSYLLWESDRRMDMLDPGRCLHSFRKLRDFAAKGCWEAQLSLAKACAHGHQLGLEAKASSEIVCQLFQASHAVNKQRVFSVQKGLNDTMRYILIDWLVEVATMKDFSSLCLHLTVECVDRYLRRRLVPRYRLQLLGIACMVICTRFISKEILTIREAVWLTDNTYKYEDLVRMMGEVVSALDGKIRVPTVVDYKDVLLTLVPMAPRTQHLCSFLCELSLLHTSLAAYAPAHLAAAALLLARLTHGQTQPWTTQLWDLTGFSCEDLIPCVLSLHQKCFHDDAPKDYRQVSLTAVKQRFEDKRYEEISLEEVLSYGQLCAALGVKQESLEPAPFLSAGDIHAFLSSPSARRTKRKRENSLQEDRGSFVTTPTAELSSQEETLLGSFLDWSLDYCSGYEGDQESEGEKEGDVTAPSGVLDVTVVYLSPEEHCCQESSDEEACPEEACGAQDTQALVPGHQALRTPGPEPPLCSRWGLGKDVTTSGYSSVNSASPTDSGRTSGGPPRSTSELPTGSSLNTQPCHHHARKSCLQCRPPSPPESCAPQQQVKRKNLSAHSEEEEEDMNLGFLKL.

The Nuclear localization signal 1 motif lies at 20 to 28 (KRRIRRRPR). The F-box domain maps to 29–76 (NLTILNLPEDALFHILKWLSVGDILAVRAVHSHLKYLVDNHASVWACA). The 115-residue stretch at 291–405 (HAVNKQRVFS…EVVSALDGKI (115 aa)) folds into the Cyclin N-terminal domain. Short sequence motifs (d box) lie at residues 310–313 (RYIL), 343–346 (RRRL), 349–352 (RYRL), and 351–354 (RLQL). 2 disordered regions span residues 566-585 (SARR…RGSF) and 700-788 (TSGY…FLKL). Positions 568–574 (RRTKRKR) match the Nuclear localization signal 2 motif. The interval 582-766 (RGSFVTTPTA…ESCAPQQQVK (185 aa)) is PEST. 2 stretches are compositionally biased toward polar residues: residues 700 to 716 (TSGY…DSGR) and 723 to 738 (RSTS…NTQP). The D box 5 signature appears at 767–770 (RKNL).

It belongs to the cyclin family. Cyclin AB subfamily. As to quaternary structure, component of the SCF(CCNF) complex consisting of CUL1, RBX1, SKP1 and CCNF. Interacts with SKP1. Interacts with CUL1. Interacts with CCNB1; interaction is required for nuclear localization of CCNB1. Interacts with CCP110; this interaction leads to CCP110 ubiquitination and degradation via the proteasome pathway. Interacts (via the Cyclin N-terminal domain) with MYBL2/BMYB. Interacts with FZR1/CDH1 (via N-terminus). Interacts with RRM2 (via Cy motif and when phosphorylated at 'Thr-33'); the interaction occurs exclusively in G2 and early M. Interacts with CDC6 (via Cy motif); the interaction takes place during G2 and M phase. Post-translationally, degraded when the spindle assembly checkpoint is activated during the G2-M transition. Degradation is not dependent on the proteasome or ubiquitin and depends on the C-terminal PEST sequence. Phosphorylated just before cells enter into mitosis. In terms of processing, ubiquitinated by the anaphase-promoting complex (APC/C); leading to its degradation by the proteasome.

Its subcellular location is the nucleus. The protein resides in the cytoplasm. It is found in the perinuclear region. The protein localises to the cytoskeleton. It localises to the microtubule organizing center. Its subcellular location is the centrosome. The protein resides in the centriole. Substrate recognition component of a SCF (SKP1-CUL1-F-box protein) E3 ubiquitin-protein ligase complex which mediates the ubiquitination and subsequent proteasomal degradation of target proteins. The SCF(CCNF) E3 ubiquitin-protein ligase complex is an integral component of the ubiquitin proteasome system (UPS) and links proteasome degradation to the cell cycle. Mediates the substrate recognition and the proteasomal degradation of various target proteins involved in the regulation of cell cycle progression and in the maintenance of genome stability. Mediates the ubiquitination and subsequent proteasomal degradation of CP110 during G2 phase, thereby acting as an inhibitor of centrosome reduplication. In G2, mediates the ubiquitination and proteasomal degradation of CDC6, thereby suppressing DNA re-replication and preventing genome instability. Involved in the ubiquitination and degradation of the substrate adapter CDH1 of the anaphase-promoting complex (APC/C), thereby acting as an antagonist of APC/C in regulating G1 progression and S phase entry. May play a role in the G2 cell cycle checkpoint control after DNA damage, possibly by promoting the ubiquitination of MYBL2/BMYB. This Bos taurus (Bovine) protein is Cyclin-F (CCNF).